The sequence spans 317 residues: Type II restriction enzyme NaeI (317 aa).

In terms of assembly, homodimer.

It catalyses the reaction Endonucleolytic cleavage of DNA to give specific double-stranded fragments with terminal 5'-phosphates.. An E and P subtype restriction enzyme that recognizes the double-stranded unmethylated sequence 5'-GCCGGC-3' and cleaves after C-3. This chain is Type II restriction enzyme NaeI, found in Lentzea aerocolonigenes (Lechevalieria aerocolonigenes).